A 428-amino-acid polypeptide reads, in one-letter code: MSIIEQVGAREILDSRGNPTVEVEVLLDDGSFARAAVPSGASTGEHEAVELRDGGDRYNGKGVEKAVEAVLSEIAPAIIGIDATEQRTVDQALLDADGTPDKSRLGANALLGASLAVARAAAESSGLDLFRYVGGPNAHVLPVPMMNILNGGAHADTGVDVQEFMVAPIGAATFKESLRWGAEVYHALKSVLKEKGLATGLGDEGGFAPDVAGTKEALDLISLAVGKTGLVLGTDVALALDVAATEFYTDGTGYKFEGSNRTADEMAAFYAELVDAYPIVSIEDPLDEDDWDGWVALTDQIGNKVQLVGDDLFVTNPERLEEGIVKGAANALLVKVNQIGTLTETLDAVDLAHRNGYKTMMSHRSGETEDTTIADLAVAVGSGQIKTGAPARSERVAKYNQLLRIEENLGDAARYAGEVAFPRFAFEG.

(2R)-2-phosphoglycerate is bound at residue glutamine 162. The active-site Proton donor is the glutamate 204. Residues aspartate 241, glutamate 283, and aspartate 310 each coordinate Mg(2+). Lysine 335, arginine 364, serine 365, and lysine 386 together coordinate (2R)-2-phosphoglycerate. Lysine 335 functions as the Proton acceptor in the catalytic mechanism.

Belongs to the enolase family. The cofactor is Mg(2+).

It is found in the cytoplasm. The protein resides in the secreted. Its subcellular location is the cell surface. It catalyses the reaction (2R)-2-phosphoglycerate = phosphoenolpyruvate + H2O. The protein operates within carbohydrate degradation; glycolysis; pyruvate from D-glyceraldehyde 3-phosphate: step 4/5. Its function is as follows. Catalyzes the reversible conversion of 2-phosphoglycerate (2-PG) into phosphoenolpyruvate (PEP). It is essential for the degradation of carbohydrates via glycolysis. The protein is Enolase of Rhodococcus opacus (strain B4).